We begin with the raw amino-acid sequence, 647 residues long: A-type voltage-gated potassium channel KCND1 (647 aa).

Residues 1 to 183 are Cytoplasmic-facing; sequence MAAGLATWLP…RAFENPHTST (183 aa). Positions 2 to 20 are interaction with KCNIP1, KCNIP2, and other family members; that stretch reads AAGLATWLPFARAAAVGWL. Residues histidine 104, cysteine 131, and cysteine 132 each contribute to the Zn(2+) site. Residues 144–163 form a disordered region; that stretch reads AERLAEDEEAEQAGDGPALP. A helical transmembrane segment spans residues 184-205; it reads AALVFYYVTGFFIAVSVIANVV. The Extracellular segment spans residues 206 to 230; sequence ETIPCRGSARRSSREQPCGERFPQA. A helical membrane pass occupies residues 231–252; that stretch reads FFCMDTACVLIFTGEYLLRLFA. The Cytoplasmic segment spans residues 253-263; it reads APSRCRFLRSV. The chain crosses the membrane as a helical span at residues 264–284; the sequence is MSLIDVVAILPYYIGLLVPKN. Over 285–287 the chain is Extracellular; that stretch reads DDV. Residues 288–308 form a helical; Voltage-sensor membrane-spanning segment; it reads SGAFVTLRVFRVFRIFKFSRH. Topologically, residues 309–323 are cytoplasmic; the sequence is SQGLRILGYTLKSCA. The S4-S5 linker stretch occupies residues 310–323; the sequence is QGLRILGYTLKSCA. A helical transmembrane segment spans residues 324–345; that stretch reads SELGFLLFSLTMAIIIFATVMF. Residues 346 to 359 lie on the Extracellular side of the membrane; the sequence is YAEKGTNKTNFTSI. Residues asparagine 352 and asparagine 355 are each glycosylated (N-linked (GlcNAc...) asparagine). The helical intramembrane region spans 360–371; it reads PAAFWYTIVTMT. The Selectivity filter signature appears at 372 to 377; sequence TLGYGD. An intramembrane segment occupies 372-379; sequence TLGYGDMV. Over 380–386 the chain is Extracellular; that stretch reads PSTIAGK. A helical transmembrane segment spans residues 387–415; sequence IFGSICSLSGVLVIALPVPVIVSNFSRIY. The Cytoplasmic segment spans residues 416–647; it reads HQNQRADKRR…FPETVKISSL (232 aa). Position 458 is a phosphoserine (serine 458). Positions 474-489 are required for dendritic targeting; it reads FEQQHHHLLHCLEKTT. Residues 506–524 are compositionally biased toward low complexity; the sequence is VSPGGRTSRSTSVSSQPVG. A disordered region spans residues 506–531; that stretch reads VSPGGRTSRSTSVSSQPVGPGSLLSS. A Phosphoserine modification is found at serine 555. The interval 601 to 634 is disordered; sequence IPTPPANTPDESQPSSPGGGGRAGSTLRNSSLGT.

This sequence belongs to the potassium channel family. D (Shal) (TC 1.A.1.2) subfamily. Kv4.1/KCND1 sub-subfamily. In terms of assembly, component of heteromultimeric potassium channels. Identified in potassium channel complexes containing KCND1, KCND2, KCND3, KCNIP1, KCNIP2, KCNIP3, KCNIP4, DPP6 and DPP10. In terms of tissue distribution, widely expressed. Highly expressed in brain, in particular in cerebellum and thalamus; detected at lower levels in the other parts of the brain.

It is found in the cell membrane. The enzyme catalyses K(+)(in) = K(+)(out). Functionally, A-type voltage-gated potassium channel that mediates transmembrane potassium transport in excitable membranes in the brain. Mediates A-type current I(SA) in suprachiasmatic nucleus (SCN) neurons. Exhibits a low-threshold A-type current with a hyperpolarized steady-state inactivation midpoint and the recovery process was steeply voltage-dependent, with recovery being markedly faster at more negative potentials. May regulates repetitive firing rates in the suprachiasmatic nucleus (SCN) neurons and circadian rhythms in neuronal excitability and behavior. Contributes to the regulation of the circadian rhythm of action potential firing in suprachiasmatic nucleus neurons, which regulates the circadian rhythm of locomotor activity. The regulatory subunit KCNIP1 modulates the kinetics of channel inactivation, increases the current amplitudes and accelerates recovery from inactivation, shifts activation in a depolarizing direction. The regulatory subunit DPP10 decreases the voltage sensitivity of the inactivation channel gating. The sequence is that of A-type voltage-gated potassium channel KCND1 from Homo sapiens (Human).